The chain runs to 492 residues: Gamma-aminobutyric acid receptor subunit alpha-3 (492 aa).

A signal peptide spans 1 to 28 (MIITQTSHCYMTSLGILFLINILPGTTG). Residues 28–54 (GQGESRRQEPGDFVKQDIGGLSPKHAP) form a disordered region. The Extracellular portion of the chain corresponds to 29 to 274 (QGESRRQEPG…MTTHFHLKRK (246 aa)). A compositionally biased stretch (basic and acidic residues) spans 31–42 (ESRRQEPGDFVK). Residue N63 is glycosylated (N-linked (GlcNAc...) asparagine). Position 119 (R119) interacts with 4-aminobutanoate. N-linked (GlcNAc...) asparagine glycosylation is found at N163 and N176. T182 is a 4-aminobutanoate binding site. C191 and C205 are joined by a disulfide. N228 is a glycosylation site (N-linked (GlcNAc...) asparagine). A helical transmembrane segment spans residues 275–295 (IGYFVIQTYLPCIMTVILSQV). Over 296–305 (SFWLNRESVP) the chain is Cytoplasmic. Residues 306–325 (ARTVFGVTTVLTMTTLSISA) traverse the membrane as a helical segment. At 326–336 (RNSLPKVAYAT) the chain is on the extracellular side. Residues 337 to 357 (AMDWFIAVCYAFVFSALIEFA) form a helical membrane-spanning segment. Residues 358-457 (TVNYFTKRSW…TYNSVSKVDK (100 aa)) are Cytoplasmic-facing. Position 426 is a phosphoserine (S426). A Phosphothreonine modification is found at T427. S433 and S442 each carry phosphoserine. A helical membrane pass occupies residues 458-478 (ISRIIFPVLFAIFNLVYWATY). Topologically, residues 479–492 (VNRESAIKGMIRKQ) are extracellular.

Belongs to the ligand-gated ion channel (TC 1.A.9) family. Gamma-aminobutyric acid receptor (TC 1.A.9.5) subfamily. GABRA3 sub-subfamily. In terms of assembly, heteropentamer, formed by a combination of alpha (GABRA1-6), beta (GABRB1-3), gamma (GABRG1-3), delta (GABRD), epsilon (GABRE), rho (GABRR1-3), pi (GABRP) and theta (GABRQ) chains, each subunit exhibiting distinct physiological and pharmacological properties. Binds UBQLN1. Interacts with GPHN.

Its subcellular location is the postsynaptic cell membrane. It is found in the cell membrane. The catalysed reaction is chloride(in) = chloride(out). With respect to regulation, potentiated by etomidate, propofol, pregnanolone and flurazepam. Its function is as follows. Alpha subunit of the heteropentameric ligand-gated chloride channel gated by gamma-aminobutyric acid (GABA), a major inhibitory neurotransmitter in the brain. GABA-gated chloride channels, also named GABA(A) receptors (GABAAR), consist of five subunits arranged around a central pore and contain GABA active binding site(s) located at the alpha and beta subunit interface(s). When activated by GABA, GABAARs selectively allow the flow of chloride anions across the cell membrane down their electrochemical gradient. Chloride influx into the postsynaptic neuron following GABAAR opening decreases the neuron ability to generate a new action potential, thereby reducing nerve transmission. This is Gamma-aminobutyric acid receptor subunit alpha-3 from Homo sapiens (Human).